A 316-amino-acid polypeptide reads, in one-letter code: ATP synthase gamma chain (316 aa).

This sequence belongs to the ATPase gamma chain family. F-type ATPases have 2 components, CF(1) - the catalytic core - and CF(0) - the membrane proton channel. CF(1) has five subunits: alpha(3), beta(3), gamma(1), delta(1), epsilon(1). CF(0) has three main subunits: a, b and c.

The protein resides in the cellular thylakoid membrane. Its function is as follows. Produces ATP from ADP in the presence of a proton gradient across the membrane. The gamma chain is believed to be important in regulating ATPase activity and the flow of protons through the CF(0) complex. This chain is ATP synthase gamma chain, found in Prochlorococcus marinus (strain MIT 9313).